A 454-amino-acid chain; its full sequence is tRNA modification GTPase MnmE (454 aa).

The (6S)-5-formyl-5,6,7,8-tetrahydrofolate site is built by Arg-23, Glu-80, and Lys-120. The 162-residue stretch at 216–377 (GMKVVIAGRP…LRDHLKQSMG (162 aa)) folds into the TrmE-type G domain. A K(+)-binding site is contributed by Asn-226. GTP is bound by residues 226-231 (NAGKSS), 245-251 (TDIAGTT), 270-273 (DTAG), 335-338 (NKAD), and 358-360 (SAR). A Mg(2+)-binding site is contributed by Ser-230. 3 residues coordinate K(+): Thr-245, Ile-247, and Thr-250. Thr-251 serves as a coordination point for Mg(2+). Lys-454 is a binding site for (6S)-5-formyl-5,6,7,8-tetrahydrofolate.

The protein belongs to the TRAFAC class TrmE-Era-EngA-EngB-Septin-like GTPase superfamily. TrmE GTPase family. Homodimer. Heterotetramer of two MnmE and two MnmG subunits. It depends on K(+) as a cofactor.

The protein resides in the cytoplasm. In terms of biological role, exhibits a very high intrinsic GTPase hydrolysis rate. Involved in the addition of a carboxymethylaminomethyl (cmnm) group at the wobble position (U34) of certain tRNAs, forming tRNA-cmnm(5)s(2)U34. The protein is tRNA modification GTPase MnmE of Yersinia pseudotuberculosis serotype O:3 (strain YPIII).